The primary structure comprises 204 residues: Protein OPG030 (204 aa).

Positions 95-177 (FLRQYINNNI…ITYSELTNAI (83 aa)) constitute a BACK domain.

This sequence belongs to the orthopoxvirus OPG030 family.

This chain is Protein OPG030 (OPG30), found in Bos taurus (Bovine).